The following is a 292-amino-acid chain: 4-hydroxy-tetrahydrodipicolinate synthase (292 aa).

Thr45 serves as a coordination point for pyruvate. The active-site Proton donor/acceptor is Tyr133. Catalysis depends on Lys161, which acts as the Schiff-base intermediate with substrate. Pyruvate is bound at residue Ile203.

This sequence belongs to the DapA family. In terms of assembly, homodimer.

The protein resides in the cytoplasm. The catalysed reaction is L-aspartate 4-semialdehyde + pyruvate = (2S,4S)-4-hydroxy-2,3,4,5-tetrahydrodipicolinate + H2O + H(+). It functions in the pathway amino-acid biosynthesis; L-lysine biosynthesis via DAP pathway; (S)-tetrahydrodipicolinate from L-aspartate: step 3/4. Catalyzes the condensation of (S)-aspartate-beta-semialdehyde [(S)-ASA] and pyruvate to 4-hydroxy-tetrahydrodipicolinate (HTPA). The sequence is that of 4-hydroxy-tetrahydrodipicolinate synthase from Stutzerimonas stutzeri (strain A1501) (Pseudomonas stutzeri).